Reading from the N-terminus, the 247-residue chain is F-box and leucine-rich protein 22 (247 aa).

Residues 6 to 52 form the F-box domain; sequence TMHITQLNRECLLHLFSFLDKDSRKSLARTCSQLHDVFEDPALWSLL. 2 disordered regions span residues 124–154 and 173–247; these read SPRR…PDHS and GLGS…AFPQ. Over residues 184-200 the composition is skewed to pro residues; that stretch reads ETPPAPGVSWGPPPPGA.

As to quaternary structure, directly interacts with SKP1 and CUL1. In terms of tissue distribution, enriched in cardiac muscle.

It localises to the cytoplasm. The protein resides in the myofibril. Its subcellular location is the sarcomere. It is found in the z line. The protein operates within protein modification; protein ubiquitination. Substrate-recognition component of the SCF (SKP1-CUL1-F-box protein)-type E3 ubiquitin ligase complex. Promotes ubiquitination of sarcomeric proteins alpha-actinin-2 (ACTN2) and filamin-C (FLNC). The polypeptide is F-box and leucine-rich protein 22 (FBXL22) (Homo sapiens (Human)).